The following is a 176-amino-acid chain: Cytochrome b (176 aa).

A run of 3 helical transmembrane segments spans residues phenylalanine 33–methionine 53, tryptophan 77–valine 98, and tryptophan 113–leucine 133. Positions 83 and 97 each coordinate heme b.

This sequence belongs to the cytochrome b family. In terms of assembly, the cytochrome bc1 complex contains 11 subunits: 3 respiratory subunits (MT-CYB, CYC1 and UQCRFS1), 2 core proteins (UQCRC1 and UQCRC2) and 6 low-molecular weight proteins (UQCRH/QCR6, UQCRB/QCR7, UQCRQ/QCR8, UQCR10/QCR9, UQCR11/QCR10 and a cleavage product of UQCRFS1). This cytochrome bc1 complex then forms a dimer. Heme b serves as cofactor.

It localises to the mitochondrion inner membrane. Component of the ubiquinol-cytochrome c reductase complex (complex III or cytochrome b-c1 complex) that is part of the mitochondrial respiratory chain. The b-c1 complex mediates electron transfer from ubiquinol to cytochrome c. Contributes to the generation of a proton gradient across the mitochondrial membrane that is then used for ATP synthesis. This chain is Cytochrome b (MT-CYB), found in Myotis leibii (Eastern small-footed myotis).